Reading from the N-terminus, the 215-residue chain is CASP-like protein 1E1 (215 aa).

At 1–51 (MESSRGKPGLNGSGGGAAAFDYSSRRGYYTGAGAALPPLAAGSRAPPVDPC) the chain is on the cytoplasmic side. The helical transmembrane segment at 52–72 (CVVLRVFVLLGTLASAVVMAA) threads the bilayer. The Extracellular segment spans residues 73–103 (DRQSTTVQIAAGEELAPPLRVPVTAKWTYSS). A helical transmembrane segment spans residues 104–124 (AFVYFVVANAMVFAFSAAALA). Topologically, residues 125–130 (AVRRRS) are cytoplasmic. Residues 131–151 (AVVPVMVGDLVAMALLFSAVG) traverse the membrane as a helical segment. The Extracellular segment spans residues 152–185 (AAAQFGLLGERGNAHVRWAKVCDVYGPFCERAMA). Residues 186–206 (AVVVALIAAFADLVLLMLTIL) traverse the membrane as a helical segment. The Cytoplasmic portion of the chain corresponds to 207–215 (TIHKASSYY).

This sequence belongs to the Casparian strip membrane proteins (CASP) family. As to quaternary structure, homodimer and heterodimers.

The protein localises to the cell membrane. The protein is CASP-like protein 1E1 of Oryza sativa subsp. japonica (Rice).